We begin with the raw amino-acid sequence, 116 residues long: Small ribosomal subunit protein bS18c (116 aa).

Residues 1-13 (MKPSFRNTSPSFR) are compositionally biased toward polar residues. The disordered stretch occupies residues 1 to 51 (MKPSFRNTSPSFRNRSKPYFRNRSKPYFRNRSKPSFRNTSKRFSPNQQSFR). A compositionally biased stretch (basic residues) spans 14 to 34 (NRSKPYFRNRSKPYFRNRSKP). Positions 35–49 (SFRNTSKRFSPNQQS) are enriched in polar residues.

Belongs to the bacterial ribosomal protein bS18 family. In terms of assembly, part of the 30S ribosomal subunit.

The protein resides in the plastid. Its subcellular location is the chloroplast. This is Small ribosomal subunit protein bS18c from Cryptomeria japonica (Japanese cedar).